Here is a 215-residue protein sequence, read N- to C-terminus: Pyrrolidone-carboxylate peptidase (215 aa).

Catalysis depends on residues Glu80, Cys143, and His167.

The protein belongs to the peptidase C15 family. In terms of assembly, homotetramer.

Its subcellular location is the cytoplasm. The catalysed reaction is Release of an N-terminal pyroglutamyl group from a polypeptide, the second amino acid generally not being Pro.. Functionally, removes 5-oxoproline from various penultimate amino acid residues except L-proline. This is Pyrrolidone-carboxylate peptidase from Bacillus cereus (strain B4264).